A 150-amino-acid chain; its full sequence is Monooxygenase dmxR10 (150 aa).

This sequence belongs to the avfA family.

Its pathway is secondary metabolite biosynthesis. In terms of biological role, monooxygenase; part of the gene cluster that mediates the biosynthesis of the dimeric xanthones cryptosporioptides. The pathway begins with the synthesis of atrochrysone thioester by the polyketide synthase dmx-nrPKS. The atrochrysone carboxyl ACP thioesterase dmxR1 then breaks the thioester bond and releases the atrochrysone carboxylic acid from dmx-nrPKS. Atrochrysone carboxylic acid is decarboxylated by the decarboxylase dmxR15, and oxidized by the anthrone oxygenase dmxR16 to yield emodin. Emodin is then reduced to emodin hydroquinone by the oxidoreductase dmxR7. A-ring reduction by the short chain dehydrogenase dmxR18, dehydration by the scytalone dehydratase-like protein dmxR17 and probable spontaneous re-oxidation, results in overall deoxygenation to chrysophanol. Baeyer-Villiger oxidation by the Baeyer-Villiger monooxygenase (BVMO) dmxR6 then yields monodictylactone in equilibrium with monodictyphenone. In the case of the cryptosporioptides biosynthesis, monodictylactone is reduced at C-12 to an alcohol (by the short chain dehydrogenases dmxR12 or dmxR8) and hydroxylated at C-5 by dmxR9, yielding the electron-rich aromatic which could eliminate H(2)O to form the ortho-quinonemethide, followed by tautomerisation to paraquinone and complete the formal reduction to produce the 10-methylgroup. Conjugate addition of C-4a-OH to the resulting paraquinone by the monooxygenase dmxR10 then gives cyclohexadienone, which is then reduced at C-5 by the short chain dehydrogenase dmxR3 to give the dihydroxanthone. The 6,7-epoxide in the cryptosporioptides could be introduced by the cytochrome P450 monooxygenase dmxL3. The highly reducing PKS dmxL2 manufactures butyrate, which is further carboxylated by dmxL1 to form ethylmalonate. It is not yet clear whether the carboxylation occurs while the butyrate is attached to the ACP of dmxL2, but this unusual fungal metabolite could then be esterified to O-5 by the O-acetyltransferase dmxR13. Finally, dimerization performed by dmxR5 gives the observed dimers cryptosporioptides A, B and C as the final products of the pathway. The protein is Monooxygenase dmxR10 of Cryptosporiopsis sp. (strain 8999).